A 577-amino-acid chain; its full sequence is 2-succinyl-5-enolpyruvyl-6-hydroxy-3-cyclohexene-1-carboxylate synthase (577 aa).

The protein belongs to the TPP enzyme family. MenD subfamily. In terms of assembly, homodimer. It depends on Mg(2+) as a cofactor. Mn(2+) serves as cofactor. Thiamine diphosphate is required as a cofactor.

It carries out the reaction isochorismate + 2-oxoglutarate + H(+) = 5-enolpyruvoyl-6-hydroxy-2-succinyl-cyclohex-3-ene-1-carboxylate + CO2. It functions in the pathway quinol/quinone metabolism; 1,4-dihydroxy-2-naphthoate biosynthesis; 1,4-dihydroxy-2-naphthoate from chorismate: step 2/7. Its pathway is cofactor biosynthesis; phylloquinone biosynthesis. Functionally, catalyzes the thiamine diphosphate-dependent decarboxylation of 2-oxoglutarate and the subsequent addition of the resulting succinic semialdehyde-thiamine pyrophosphate anion to isochorismate to yield 2-succinyl-5-enolpyruvyl-6-hydroxy-3-cyclohexene-1-carboxylate (SEPHCHC). The sequence is that of 2-succinyl-5-enolpyruvyl-6-hydroxy-3-cyclohexene-1-carboxylate synthase from Synechococcus sp. (strain CC9311).